The chain runs to 364 residues: Succinate--CoA ligase [ADP-forming] subunit beta (364 aa).

One can recognise an ATP-grasp domain in the interval 9-229 (KNIFKKYGIP…EFEEYKNKEK (221 aa)). Residues lysine 43, 50–52 (GRG), glutamate 89, leucine 92, and glutamate 97 each bind ATP. 2 residues coordinate Mg(2+): asparagine 189 and aspartate 203. Residues asparagine 246 and 303 to 305 (GIT) contribute to the substrate site.

This sequence belongs to the succinate/malate CoA ligase beta subunit family. In terms of assembly, heterotetramer of two alpha and two beta subunits. Mg(2+) serves as cofactor.

The enzyme catalyses succinate + ATP + CoA = succinyl-CoA + ADP + phosphate. It catalyses the reaction GTP + succinate + CoA = succinyl-CoA + GDP + phosphate. The protein operates within carbohydrate metabolism; tricarboxylic acid cycle; succinate from succinyl-CoA (ligase route): step 1/1. Succinyl-CoA synthetase functions in the citric acid cycle (TCA), coupling the hydrolysis of succinyl-CoA to the synthesis of either ATP or GTP and thus represents the only step of substrate-level phosphorylation in the TCA. The beta subunit provides nucleotide specificity of the enzyme and binds the substrate succinate, while the binding sites for coenzyme A and phosphate are found in the alpha subunit. The protein is Succinate--CoA ligase [ADP-forming] subunit beta of Methanocaldococcus jannaschii (strain ATCC 43067 / DSM 2661 / JAL-1 / JCM 10045 / NBRC 100440) (Methanococcus jannaschii).